We begin with the raw amino-acid sequence, 125 residues long: Protein ApaG (125 aa).

The ApaG domain maps to 1–125 (MIEQPRICVQ…FRLAIPALIH (125 aa)).

The polypeptide is Protein ApaG (Yersinia pestis bv. Antiqua (strain Antiqua)).